We begin with the raw amino-acid sequence, 588 residues long: Protein kinase C iota type (588 aa).

Positions 18–101 (QVRVKAYYRG…SELIIHVFPC (84 aa)) constitute a PB1 domain. The Phorbol-ester/DAG-type zinc-finger motif lies at 133–183 (GHAFQAKRFNRRAHCAICTDRIWGLGRQGYKCINCKLLVHKKCHKLVTVEC). The tract at residues 194–213 (GRIDPGSTHPEHPDQVLGKK) is disordered. In terms of domain architecture, Protein kinase spans 246-514 (FDLLRVIGRG…FADIMAHPFF (269 aa)). Residues 252–260 (IGRGSYAKV) and Lys-275 contribute to the ATP site. Asp-370 (proton acceptor) is an active-site residue. Residues Thr-404 and Thr-556 each carry the phosphothreonine modification. The AGC-kinase C-terminal domain occupies 515–586 (RNVDWDLMEQ…INPLLMSAEE (72 aa)).

The protein belongs to the protein kinase superfamily. AGC Ser/Thr protein kinase family. PKC subfamily.

The catalysed reaction is L-seryl-[protein] + ATP = O-phospho-L-seryl-[protein] + ADP + H(+). It catalyses the reaction L-threonyl-[protein] + ATP = O-phospho-L-threonyl-[protein] + ADP + H(+). Its activity is regulated as follows. Exhibits an elevated basal enzymatic activity and is not regulated by diacylglycerol, phosphatidylserine, phorbol esters or calcium ions. Two specific sites, Thr-404 (activation loop of the kinase domain) and Thr-556 (turn motif), need to be phosphorylated for its full activation. Calcium- and diacylglycerol-independent serine/ threonine-protein kinase that plays a general protective role against apoptotic stimuli, is involved in NF-kappa-B activation, cell survival, differentiation and polarity, and contributes to the regulation of microtubule dynamics in the early secretory pathway. Is required for the formation and maintenance of the zonula adherens during early epithelial development and plays a critical role in organ morphogenesis and in regulating the orientation of cell division. Required for polarized epithelial organization, myocardium coherence and cell connectivity in the early somite stages. Required for heart cone tilt and development of circulatory architecture during embryogenesis. The protein is Protein kinase C iota type (prkci) of Danio rerio (Zebrafish).